The following is a 131-amino-acid chain: Histone H2B.1 (131 aa).

The segment covering 1–20 (MAPPKAEKKPASKAPAEKKP) has biased composition (basic and acidic residues). Residues 1 to 39 (MAPPKAEKKPASKAPAEKKPAAKKTASATDSKKRTKTRK) form a disordered region. 2 positions are modified to N6-acetyllysine; alternate: Lys8 and Lys9. Glycyl lysine isopeptide (Lys-Gly) (interchain with G-Cter in SUMO); alternate cross-links involve residues Lys8 and Lys9. The residue at position 12 (Ser12) is a Phosphoserine. Lys13 is modified (N6-acetyllysine). The residue at position 18 (Lys18) is an N6-acetyllysine; alternate. Residue Lys18 forms a Glycyl lysine isopeptide (Lys-Gly) (interchain with G-Cter in SUMO); alternate linkage. Lys19 participates in a covalent cross-link: Glycyl lysine isopeptide (Lys-Gly) (interchain with G-Cter in SUMO). Residue Lys125 forms a Glycyl lysine isopeptide (Lys-Gly) (interchain with G-Cter in ubiquitin) linkage.

It belongs to the histone H2B family. In terms of assembly, the nucleosome is a histone octamer containing two molecules each of H2A, H2B, H3 and H4 assembled in one H3-H4 heterotetramer and two H2A-H2B heterodimers. The octamer wraps approximately 147 bp of DNA. Post-translationally, monoubiquitinated to form H2BK123ub1. H2BK123ub1 gives a specific tag for epigenetic transcriptional activation and is also prerequisite for H3K4me and H3K79me formation. H2BK123ub1 also modulates the formation of double-strand breaks during meiosis and is a prerequisite for DNA-damage checkpoint activation. In terms of processing, phosphorylated by STE20 to form H2BS10ph during progression through meiotic prophase. May be correlated with chromosome condensation. Acetylated by GCN5 to form H2BK11ac and H2BK16ac. H2BK16ac can also be formed by ESA1. Acetylation of N-terminal lysines and particularly formation of H2BK11acK16ac has a positive effect on transcription. Post-translationally, sumoylation to form H2BK6su or H2BK7su, and probably also H2BK16su or H2BK17su, occurs preferentially near the telomeres and represses gene transcription.

It is found in the nucleus. The protein resides in the chromosome. Functionally, core component of nucleosome. Nucleosomes wrap and compact DNA into chromatin, limiting DNA accessibility to the cellular machineries which require DNA as a template. Histones thereby play a central role in transcription regulation, DNA repair, DNA replication and chromosomal stability. DNA accessibility is regulated via a complex set of post-translational modifications of histones, also called histone code, and nucleosome remodeling. The polypeptide is Histone H2B.1 (HTB1) (Scheffersomyces stipitis (strain ATCC 58785 / CBS 6054 / NBRC 10063 / NRRL Y-11545) (Yeast)).